We begin with the raw amino-acid sequence, 965 residues long: Collagenase ColQ1 (965 aa).

Residues 1 to 30 (MNKKSKINKVMLSISTMALSLGALQAPASA) form the signal peptide. A propeptide spanning residues 31–93 (EEKVPYNVLK…KAAVKQVKES (63 aa)) is cleaved from the precursor. Residues 94–366 (YSMADLNKMN…AVEQITTNYN (273 aa)) are activator domain. Residues 94–765 (YSMADLNKMN…VFHGIAKDDG (672 aa)) form an S1 metalloprotease domain region. The tract at residues 376 to 645 (DLEKIRKEGK…MQQLIDNQDK (270 aa)) is catalytic subdomain. H501 lines the Zn(2+) pocket. E502 is a catalytic residue. Residues H505 and E533 each contribute to the Zn(2+) site. The helper subdomain stretch occupies residues 653–765 (DDYLAEHAPK…VFHGIAKDDG (113 aa)). In terms of domain architecture, PKD spans 769-850 (APTVNINGPY…ESKSETTVTV (82 aa)). Residues 842 to 867 (SKSETTVTVKDGSLTESEPNNRPEEA) form a disordered region. Positions 845-859 (ETTVTVKDGSLTESE) are enriched in polar residues. The segment at 853–965 (GSLTESEPNN…GDGTYKLSVK (113 aa)) is collagen-binding domain.

Belongs to the peptidase M9B family. Collagenase subfamily. Ca(2+) is required as a cofactor. The cofactor is Zn(2+).

It is found in the secreted. The enzyme catalyses Digestion of native collagen in the triple helical region at Xaa-|-Gly bonds. With synthetic peptides, a preference is shown for Gly at P3 and P1', Pro and Ala at P2 and P2', and hydroxyproline, Ala or Arg at P3'.. Its activity is regulated as follows. Strongly inhibited by EDTA. Not inhibited by E-64 and PMSF, broad-spectrum cysteine and serine protease inhibitors. Functionally, acts as a true collagenase, which is highly active and cleaves natively folded collagen. In vitro, can also cleave gelatin and the synthetic peptide FALGPA (furylacryloyl-Leu-Gly-Pro-Ala). Causes damage on dermal collagen (COL), resulting in gaps in the tissue, which might lead to an accelerated bacterial infiltration and penetration into deeper sites of the host. The chain is Collagenase ColQ1 from Bacillus cereus (strain Q1).